The chain runs to 290 residues: 4-hydroxybenzoate octaprenyltransferase (290 aa).

A run of 8 helical transmembrane segments spans residues 21 to 41, 44 to 64, 97 to 117, 143 to 163, 168 to 188, 211 to 231, 235 to 255, and 270 to 290; these read IGTM…ADGM, LRVL…GCII, LFVV…PLVV, FLGV…TGEV, WWLF…YAMV, EIIG…GWSG, LLYG…QRLI, and NNWA…FAAL.

The protein belongs to the UbiA prenyltransferase family. Mg(2+) serves as cofactor.

It is found in the cell inner membrane. It catalyses the reaction all-trans-octaprenyl diphosphate + 4-hydroxybenzoate = 4-hydroxy-3-(all-trans-octaprenyl)benzoate + diphosphate. It participates in cofactor biosynthesis; ubiquinone biosynthesis. In terms of biological role, catalyzes the prenylation of para-hydroxybenzoate (PHB) with an all-trans polyprenyl group. Mediates the second step in the final reaction sequence of ubiquinone-8 (UQ-8) biosynthesis, which is the condensation of the polyisoprenoid side chain with PHB, generating the first membrane-bound Q intermediate 3-octaprenyl-4-hydroxybenzoate. This chain is 4-hydroxybenzoate octaprenyltransferase, found in Shewanella amazonensis (strain ATCC BAA-1098 / SB2B).